The sequence spans 105 residues: Large ribosomal subunit protein uL24 (105 aa).

It belongs to the universal ribosomal protein uL24 family. Part of the 50S ribosomal subunit.

In terms of biological role, one of two assembly initiator proteins, it binds directly to the 5'-end of the 23S rRNA, where it nucleates assembly of the 50S subunit. One of the proteins that surrounds the polypeptide exit tunnel on the outside of the subunit. This chain is Large ribosomal subunit protein uL24, found in Francisella tularensis subsp. novicida (strain U112).